The primary structure comprises 103 residues: Spherulin-3A (103 aa).

The interval 1-13 is N-terminal arm; it reads MSVCKGVSGNPAK. Beta/gamma crystallin 'Greek key' domains are found at residues 14–55 and 57–99; these read GEVF…KVGP and TKAF…IVAT.

This sequence belongs to the beta/gamma-crystallin family.

Its subcellular location is the cytoplasm. Its function is as follows. Structural protein. This chain is Spherulin-3A, found in Physarum polycephalum (Slime mold).